The following is a 199-amino-acid chain: 3-hexulose-6-phosphate isomerase (199 aa).

The SIS domain maps to 44–186 (LARQIVQPGR…FQSLWDHTEV (143 aa)). Substrate-binding positions include Ser62 and 101–106 (SGSGTT). Glu166 (proton acceptor) is an active-site residue.

It belongs to the SIS family. PHI subfamily.

It catalyses the reaction D-arabino-hex-3-ulose 6-phosphate = beta-D-fructose 6-phosphate. The protein operates within one-carbon metabolism; formaldehyde assimilation via RuMP pathway; D-fructose 6-phosphate from D-ribulose 5-phosphate and formaldehyde: step 2/2. Functionally, catalyzes the isomerization between 3-hexulose 6-phosphate and fructose 6-phosphate. This is 3-hexulose-6-phosphate isomerase (rmpB) from Mycobacterium gastri.